A 118-amino-acid chain; its full sequence is Fluoride-specific ion channel FluC 2 (118 aa).

A run of 4 helical transmembrane segments spans residues 1–21 (MIEA…RFAI), 33–53 (FPIA…YIIG), 55–75 (GVTT…FTTF), and 93–113 (TFLL…FLGM). Gly70 and Thr73 together coordinate Na(+).

This sequence belongs to the fluoride channel Fluc/FEX (TC 1.A.43) family.

The protein localises to the cell membrane. The catalysed reaction is fluoride(in) = fluoride(out). Na(+) is not transported, but it plays an essential structural role and its presence is essential for fluoride channel function. In terms of biological role, fluoride-specific ion channel. Important for reducing fluoride concentration in the cell, thus reducing its toxicity. This is Fluoride-specific ion channel FluC 2 from Bacillus thuringiensis subsp. konkukian (strain 97-27).